A 602-amino-acid chain; its full sequence is Rho family-interacting cell polarization regulator 2 (602 aa).

Positions 46–73 (KKPQAKVKKMHNLGHKNSTTPKEPQPKR) are disordered. Positions 48-59 (PQAKVKKMHNLG) are enriched in basic residues. Residues 83-112 (NGLDEYLEVHQTELDKLTAQLKDMRRNSRL) adopt a coiled-coil conformation. The necessary for interaction with NCAM and myoblast protrusion formation stretch occupies residues 173 to 421 (RESLTEINRS…TTAATQHRAL (249 aa)). The disordered stretch occupies residues 384–474 (GDLPYEDRVP…RSEVCQKPSN (91 aa)). A compositionally biased stretch (polar residues) spans 403-416 (AHVSSSPDITTAAT). The segment covering 423–437 (SSESSSPDCSSSDSC) has biased composition (low complexity).

Belongs to the RIPOR family. In terms of assembly, homooligomer; homooligomerization is regulated by RHOC and leads to the formation of concatemers through the association of N- and C-termini. Interacts with NCAM.

The protein resides in the cytoplasm. The protein localises to the cytoskeleton. Its subcellular location is the cell projection. It localises to the filopodium. It is found in the apical cell membrane. The protein resides in the stereocilium. The protein localises to the stereocilium membrane. Functionally, acts as an inhibitor of the small GTPase RHOA and plays several roles in the regulation of myoblast and hair cell differentiation, lymphocyte T proliferation and neutrophil polarization. Plays a role in fetal mononuclear myoblast differentiation by promoting filopodia and myotube formation. Maintains naive T lymphocytes in a quiescent state and prevents chemokine-induced T lymphocyte responses, such as cell adhesion, polarization and migration. Involved also in the regulation of neutrophil polarization, chemotaxis and adhesion. Required for normal development of inner and outer hair cell stereocilia within the cochlea of the inner ear. Plays a role for maintaining the structural organization of the basal domain of stereocilia. Involved in mechanosensory hair cell function. Required for normal hearing. In Gallus gallus (Chicken), this protein is Rho family-interacting cell polarization regulator 2.